Here is a 621-residue protein sequence, read N- to C-terminus: uncharacterized protein (621 aa).

Disordered regions lie at residues 92–134 and 268–310; these read FRNS…QINQ and KINH…DDEI. Low complexity predominate over residues 94-134; that stretch reads NSSNQSSQSNQVNQSNQSSPSSQISPSSQVNKFNQSSQINQ. Acidic residues predominate over residues 296–310; the sequence is TNDETNDETDNDDEI. Residues 354-401 adopt a coiled-coil conformation; sequence ANKIQNKIIQIVETLNAYKNKQSQIAIEAKNKIKHITVSNKEVSENIE.

This is an uncharacterized protein from Acanthamoeba polyphaga mimivirus (APMV).